A 215-amino-acid chain; its full sequence is RxLR effector protein PITG_00582 (215 aa).

An N-terminal signal peptide occupies residues 1-19 (MLPYKTLLLALGFFFTVQC). The RxLR-dEER signature appears at 39–51 (RLLRSPEKTDEER). Positions 81 to 149 (VAKQAKEMSN…QNELEKLAKQ (69 aa)) form a coiled coil.

Belongs to the RxLR effector family.

It is found in the secreted. It localises to the host cell membrane. In terms of biological role, effector that might be involved in host plant infection. This Phytophthora infestans (strain T30-4) (Potato late blight agent) protein is RxLR effector protein PITG_00582.